Reading from the N-terminus, the 213-residue chain is Na(+)-translocating NADH-quinone reductase subunit D (213 aa).

7 helical membrane passes run 21–41 (PLIA…VNTA), 42–62 (LTMG…VSLL), 77–97 (IIIS…FFDI), 101–121 (LSVF…AESL), 131–151 (FLDG…VSII), 153–173 (EFFG…FYAS), and 183–203 (FGLM…IWGV).

This sequence belongs to the NqrDE/RnfAE family. Composed of six subunits; NqrA, NqrB, NqrC, NqrD, NqrE and NqrF.

It is found in the cell inner membrane. It carries out the reaction a ubiquinone + n Na(+)(in) + NADH + H(+) = a ubiquinol + n Na(+)(out) + NAD(+). Functionally, NQR complex catalyzes the reduction of ubiquinone-1 to ubiquinol by two successive reactions, coupled with the transport of Na(+) ions from the cytoplasm to the periplasm. NqrA to NqrE are probably involved in the second step, the conversion of ubisemiquinone to ubiquinol. This is Na(+)-translocating NADH-quinone reductase subunit D from Chlamydia abortus (strain DSM 27085 / S26/3) (Chlamydophila abortus).